A 980-amino-acid polypeptide reads, in one-letter code: Hypoxia up-regulated protein 1 (980 aa).

The first 24 residues, 1-24 (MREKLSLWAIFCLVVAFLPSQTES), serve as a signal peptide directing secretion. Disordered stretches follow at residues 558–682 (EEES…DIAV) and 894–980 (KPKP…EDEL). 2 stretches are compositionally biased toward basic and acidic residues: residues 599–656 (AGKE…PEEK) and 896–906 (KPKDKAKDKNS). Over residues 907-916 (TSESSKANST) the composition is skewed to polar residues. Basic and acidic residues-rich tracts occupy residues 918 to 949 (DAEK…KAEE) and 960 to 980 (TDDK…EDEL). The Prevents secretion from ER signature appears at 977–980 (EDEL).

This sequence belongs to the heat shock protein 70 family.

The protein resides in the endoplasmic reticulum lumen. Has a pivotal role in cytoprotective cellular mechanisms triggered by oxygen deprivation. May play a role as a molecular chaperone and participate in protein folding. This chain is Hypoxia up-regulated protein 1 (hyou1), found in Danio rerio (Zebrafish).